The following is a 432-amino-acid chain: Trigger factor (432 aa).

One can recognise a PPIase FKBP-type domain in the interval 165–250 (GDFAKIDFEG…LKEIQVKAPQ (86 aa)).

Belongs to the FKBP-type PPIase family. Tig subfamily.

Its subcellular location is the cytoplasm. It catalyses the reaction [protein]-peptidylproline (omega=180) = [protein]-peptidylproline (omega=0). In terms of biological role, involved in protein export. Acts as a chaperone by maintaining the newly synthesized protein in an open conformation. Functions as a peptidyl-prolyl cis-trans isomerase. This Wolinella succinogenes (strain ATCC 29543 / DSM 1740 / CCUG 13145 / JCM 31913 / LMG 7466 / NCTC 11488 / FDC 602W) (Vibrio succinogenes) protein is Trigger factor.